Here is a 289-residue protein sequence, read N- to C-terminus: Spore coat polysaccharide biosynthesis protein SpsD (289 aa).

In terms of domain architecture, N-acetyltransferase spans 137–289 (FELGPPEPGD…YHIWPGKEAK (153 aa)).

It functions in the pathway spore coat biogenesis; spore coat polysaccharide biosynthesis. This is Spore coat polysaccharide biosynthesis protein SpsD (spsD) from Bacillus subtilis (strain 168).